A 99-amino-acid polypeptide reads, in one-letter code: Acylphosphatase-1 (99 aa).

In terms of domain architecture, Acylphosphatase-like spans 9–99 (SVDYEVFGKV…LEHSTFSICK (91 aa)). Active-site residues include arginine 24 and asparagine 42.

Belongs to the acylphosphatase family.

It catalyses the reaction an acyl phosphate + H2O = a carboxylate + phosphate + H(+). This chain is Acylphosphatase-1 (acyp1), found in Xenopus laevis (African clawed frog).